The primary structure comprises 154 residues: AP-1 complex subunit sigma-3 (154 aa).

The protein belongs to the adaptor complexes small subunit family. As to quaternary structure, adaptor protein complex 1 (AP-1) is a heterotetramer composed of two large adaptins (gamma-type subunit AP1G1 and beta-type subunit AP1B1), a medium adaptin (mu-type subunit AP1M1 or AP1M2) and a small adaptin (sigma-type subunit AP1S1 or AP1S2 or AP1S3).

The protein resides in the golgi apparatus. It is found in the cytoplasmic vesicle membrane. The protein localises to the membrane. Its subcellular location is the clathrin-coated pit. Its function is as follows. Subunit of clathrin-associated adaptor protein complex 1 that plays a role in protein sorting in the late-Golgi/trans-Golgi network (TGN) and/or endosomes. The AP complexes mediate both the recruitment of clathrin to membranes and the recognition of sorting signals within the cytosolic tails of transmembrane cargo molecules. Involved in TLR3 trafficking. This chain is AP-1 complex subunit sigma-3 (Ap1s3), found in Mus musculus (Mouse).